The following is a 528-amino-acid chain: Transcription factor cghF (528 aa).

The interval 232–283 (TPPNHATSSTPTSTRTPPTYHPHGPRPKSPLSSTPSPRTESTKSAAPSRDLA) is disordered. Low complexity predominate over residues 238-249 (TSSTPTSTRTPP). The span at 261-276 (PLSSTPSPRTESTKSA) shows a compositional bias: polar residues.

Its subcellular location is the nucleus. Transcription factor that regulates the expression of the gene cluster that mediates the biosynthesis of the tetramic acid Sch210972, a potential anti-HIV fungal natural product that contains a decalin core. In Chaetomium globosum (strain ATCC 6205 / CBS 148.51 / DSM 1962 / NBRC 6347 / NRRL 1970) (Soil fungus), this protein is Transcription factor cghF.